A 496-amino-acid polypeptide reads, in one-letter code: NADP-dependent glyceraldehyde-3-phosphate dehydrogenase (496 aa).

Residues arginine 116 and 169–170 (NY) each bind substrate. NADP(+)-binding residues include lysine 192, threonine 195, and aspartate 230. 245–249 (GGDTG) contributes to the NAD(+) binding site. Residue glutamate 264 is the Proton acceptor of the active site. 297-299 (RCT) contacts substrate. Residue cysteine 298 is the Nucleophile of the active site. Glutamate 391 provides a ligand contact to NADP(+). Residue arginine 451 coordinates substrate.

This sequence belongs to the aldehyde dehydrogenase family.

It localises to the cytoplasm. It catalyses the reaction D-glyceraldehyde 3-phosphate + NADP(+) + H2O = (2R)-3-phosphoglycerate + NADPH + 2 H(+). Its function is as follows. Important as a means of generating NADPH for biosynthetic reactions. The protein is NADP-dependent glyceraldehyde-3-phosphate dehydrogenase (GAPN) of Pisum sativum (Garden pea).